An 81-amino-acid polypeptide reads, in one-letter code: uncharacterized protein (81 aa).

Residues 1–45 form the SpoVT-AbrB domain; the sequence is MRTTIDVAGRLVIPKRIRERLGLRGNDQVEITERDGRIEIEPAPT.

This sequence to B.subtilis SpoVT.

This is an uncharacterized protein from Mycobacterium bovis (strain ATCC BAA-935 / AF2122/97).